The following is a 177-amino-acid chain: Small ribosomal subunit protein uS13 (177 aa).

The segment covering 132–145 (GVRHKRGQKVRGQR) has biased composition (basic residues). Residues 132–177 (GVRHKRGQKVRGQRTKSTGRTEGTIGVNVEAIKEEQAEDAAAEDDE) form a disordered region. Residues 167–177 (QAEDAAAEDDE) are compositionally biased toward acidic residues.

The protein belongs to the universal ribosomal protein uS13 family. Part of the 30S ribosomal subunit. Forms a loose heterodimer with protein S19. Forms two bridges to the 50S subunit in the 70S ribosome.

Its function is as follows. Located at the top of the head of the 30S subunit, it contacts several helices of the 16S rRNA. In the 70S ribosome it contacts the 23S rRNA (bridge B1a) and protein L5 of the 50S subunit (bridge B1b), connecting the 2 subunits; these bridges are implicated in subunit movement. The chain is Small ribosomal subunit protein uS13 from Haloarcula marismortui (strain ATCC 43049 / DSM 3752 / JCM 8966 / VKM B-1809) (Halobacterium marismortui).